The chain runs to 371 residues: Cytoplasmic tRNA 2-thiolation protein 1 (371 aa).

The protein belongs to the TtcA family. CTU1/NCS6/ATPBD3 subfamily.

Its subcellular location is the cytoplasm. It participates in tRNA modification; 5-methoxycarbonylmethyl-2-thiouridine-tRNA biosynthesis. In terms of biological role, plays a central role in 2-thiolation of mcm(5)S(2)U at tRNA wobble positions of tRNA(Lys), tRNA(Glu) and tRNA(Gln). Directly binds tRNAs and probably acts by catalyzing adenylation of tRNAs, an intermediate required for 2-thiolation. It is unclear whether it acts as a sulfurtransferase that transfers sulfur from thiocarboxylated URM1 onto the uridine of tRNAs at wobble position. Prior mcm(5) tRNA modification by the elongator complex is required for 2-thiolation. May also be involved in protein urmylation. The sequence is that of Cytoplasmic tRNA 2-thiolation protein 1 from Kluyveromyces lactis (strain ATCC 8585 / CBS 2359 / DSM 70799 / NBRC 1267 / NRRL Y-1140 / WM37) (Yeast).